A 352-amino-acid chain; its full sequence is Ion-translocating oxidoreductase complex subunit D (352 aa).

Helical transmembrane passes span 20-40, 42-62, 69-91, and 123-143; these read IMLL…WFFG, GTLF…AIVL, VASH…SIPP, and PAMI…TSWL. Threonine 187 carries the FMN phosphoryl threonine modification. 5 helical membrane passes run 215–235, 242–262, 267–287, 301–321, and 322–342; these read LAGV…VFLL, WHIP…GWLF, LASP…FFIL, LIFG…GGYP, and DGVA…DYYT.

This sequence belongs to the NqrB/RnfD family. The complex is composed of six subunits: RsxA, RsxB, RsxC, RsxD, RsxE and RsxG. FMN is required as a cofactor.

Its subcellular location is the cell inner membrane. Its function is as follows. Part of a membrane-bound complex that couples electron transfer with translocation of ions across the membrane. Required to maintain the reduced state of SoxR. This Salmonella typhi protein is Ion-translocating oxidoreductase complex subunit D.